Reading from the N-terminus, the 107-residue chain is Nucleoid-associated protein A1I_00660 (107 aa).

The disordered stretch occupies residues 81–107 (KCDSDSQNSMSGALSGMSLPPGFKMPF).

Belongs to the YbaB/EbfC family. As to quaternary structure, homodimer.

It localises to the cytoplasm. The protein resides in the nucleoid. Its function is as follows. Binds to DNA and alters its conformation. May be involved in regulation of gene expression, nucleoid organization and DNA protection. The protein is Nucleoid-associated protein A1I_00660 of Rickettsia bellii (strain OSU 85-389).